Here is a 411-residue protein sequence, read N- to C-terminus: Arginine deiminase (411 aa).

The Amidino-cysteine intermediate role is filled by Cys-401.

The protein belongs to the arginine deiminase family.

The protein resides in the cytoplasm. It carries out the reaction L-arginine + H2O = L-citrulline + NH4(+). The protein operates within amino-acid degradation; L-arginine degradation via ADI pathway; carbamoyl phosphate from L-arginine: step 1/2. This chain is Arginine deiminase, found in Staphylococcus haemolyticus (strain JCSC1435).